We begin with the raw amino-acid sequence, 189 residues long: Putative biopolymer transport protein ExbB-like 1 (189 aa).

3 consecutive transmembrane segments (helical) span residues 14–34 (FVTT…LWVF), 99–119 (LVVL…GTVV), and 147–167 (LIAT…YLIL).

Belongs to the ExbB/TolQ family.

The protein resides in the cell inner membrane. This Helicobacter pylori (strain J99 / ATCC 700824) (Campylobacter pylori J99) protein is Putative biopolymer transport protein ExbB-like 1.